Here is a 627-residue protein sequence, read N- to C-terminus: Hemocyanin B chain (627 aa).

Residues His173, His177, and His204 each contribute to the Cu cation site. 2 N-linked (GlcNAc...) asparagine glycosylation sites follow: Asn312 and Asn316. Positions 324, 328, and 364 each coordinate Cu cation. Cys534 and Cys582 form a disulfide bridge.

It belongs to the tyrosinase family. Hemocyanin subfamily. In terms of assembly, tarantula hemocyanin is a 24-chain polymer with seven different chains identified. As to expression, hemolymph.

The protein localises to the secreted. Its subcellular location is the extracellular space. In terms of biological role, hemocyanins are copper-containing oxygen carriers occurring freely dissolved in the hemolymph of many mollusks and arthropods. This chain is Hemocyanin B chain (HCB), found in Aphonopelma sp. (American tarantula).